Consider the following 376-residue polypeptide: Chaperone protein DnaJ (376 aa).

Residues 5 to 70 enclose the J domain; that stretch reads DYYEVLGVAK…QKRAAYDQYG (66 aa). The CR-type zinc finger occupies 136–214; that stretch reads GYDTQIRVPS…CHGSGKVKET (79 aa). The Zn(2+) site is built by cysteine 149, cysteine 152, cysteine 166, cysteine 169, cysteine 188, cysteine 191, cysteine 202, and cysteine 205. CXXCXGXG motif repeat units lie at residues 149–156, 166–173, 188–195, and 202–209; these read CGICHGSG, CPTCHGQG, CPKCHGTG, and CVHCHGSG.

This sequence belongs to the DnaJ family. As to quaternary structure, homodimer. Zn(2+) is required as a cofactor.

The protein localises to the cytoplasm. Its function is as follows. Participates actively in the response to hyperosmotic and heat shock by preventing the aggregation of stress-denatured proteins and by disaggregating proteins, also in an autonomous, DnaK-independent fashion. Unfolded proteins bind initially to DnaJ; upon interaction with the DnaJ-bound protein, DnaK hydrolyzes its bound ATP, resulting in the formation of a stable complex. GrpE releases ADP from DnaK; ATP binding to DnaK triggers the release of the substrate protein, thus completing the reaction cycle. Several rounds of ATP-dependent interactions between DnaJ, DnaK and GrpE are required for fully efficient folding. Also involved, together with DnaK and GrpE, in the DNA replication of plasmids through activation of initiation proteins. The chain is Chaperone protein DnaJ from Burkholderia thailandensis (strain ATCC 700388 / DSM 13276 / CCUG 48851 / CIP 106301 / E264).